An 89-amino-acid chain; its full sequence is Small ribosomal subunit protein uS14 (89 aa).

Belongs to the universal ribosomal protein uS14 family. As to quaternary structure, part of the 30S ribosomal subunit. Contacts proteins S3 and S10.

Its function is as follows. Binds 16S rRNA, required for the assembly of 30S particles and may also be responsible for determining the conformation of the 16S rRNA at the A site. In Chlorobium phaeobacteroides (strain BS1), this protein is Small ribosomal subunit protein uS14.